The following is a 290-amino-acid chain: Glycine--tRNA ligase alpha subunit (290 aa).

It belongs to the class-II aminoacyl-tRNA synthetase family. In terms of assembly, tetramer of two alpha and two beta subunits.

Its subcellular location is the cytoplasm. It catalyses the reaction tRNA(Gly) + glycine + ATP = glycyl-tRNA(Gly) + AMP + diphosphate. The polypeptide is Glycine--tRNA ligase alpha subunit (Prochlorococcus marinus (strain NATL2A)).